We begin with the raw amino-acid sequence, 507 residues long: UDP-N-acetylmuramoyl-L-alanyl-D-glutamate--2,6-diaminopimelate ligase (507 aa).

UDP-N-acetyl-alpha-D-muramoyl-L-alanyl-D-glutamate is bound at residue Ser32. 117-123 (GTNGKTT) is a binding site for ATP. Residues 159–160 (TT), Ser186, Gln192, and Arg194 each bind UDP-N-acetyl-alpha-D-muramoyl-L-alanyl-D-glutamate. Lys226 is modified (N6-carboxylysine). Residues Arg400, 424–427 (DNPR), Gly475, and Glu479 contribute to the meso-2,6-diaminopimelate site. A Meso-diaminopimelate recognition motif motif is present at residues 424 to 427 (DNPR).

The protein belongs to the MurCDEF family. MurE subfamily. Mg(2+) is required as a cofactor. Carboxylation is probably crucial for Mg(2+) binding and, consequently, for the gamma-phosphate positioning of ATP.

Its subcellular location is the cytoplasm. The enzyme catalyses UDP-N-acetyl-alpha-D-muramoyl-L-alanyl-D-glutamate + meso-2,6-diaminopimelate + ATP = UDP-N-acetyl-alpha-D-muramoyl-L-alanyl-gamma-D-glutamyl-meso-2,6-diaminopimelate + ADP + phosphate + H(+). It participates in cell wall biogenesis; peptidoglycan biosynthesis. In terms of biological role, catalyzes the addition of meso-diaminopimelic acid to the nucleotide precursor UDP-N-acetylmuramoyl-L-alanyl-D-glutamate (UMAG) in the biosynthesis of bacterial cell-wall peptidoglycan. The sequence is that of UDP-N-acetylmuramoyl-L-alanyl-D-glutamate--2,6-diaminopimelate ligase from Prochlorococcus marinus (strain MIT 9313).